The sequence spans 205 residues: Outer-membrane lipoprotein carrier protein (205 aa).

The signal sequence occupies residues 1–21; it reads MKKIVLLVTLVFSINYSFANA.

It belongs to the LolA family. Monomer.

The protein localises to the periplasm. Participates in the translocation of lipoproteins from the inner membrane to the outer membrane. Only forms a complex with a lipoprotein if the residue after the N-terminal Cys is not an aspartate (The Asp acts as a targeting signal to indicate that the lipoprotein should stay in the inner membrane). The polypeptide is Outer-membrane lipoprotein carrier protein (Francisella philomiragia subsp. philomiragia (strain ATCC 25017 / CCUG 19701 / FSC 153 / O#319-036)).